Reading from the N-terminus, the 704-residue chain is Polyribonucleotide nucleotidyltransferase (704 aa).

Residues aspartate 488 and aspartate 494 each contribute to the Mg(2+) site. Residues 555–614 form the KH domain; it reads PRITTIKINPEKIRDVIGKGGATIRALTEETGTTIELDDDGTVKIASSNGEATKEAIRRI. Residues 624-692 enclose the S1 motif domain; it reads GTVYNGKVVR…RQGRVRLSMK (69 aa).

It belongs to the polyribonucleotide nucleotidyltransferase family. In terms of assembly, component of the RNA degradosome, which is a multiprotein complex involved in RNA processing and mRNA degradation. The cofactor is Mg(2+).

Its subcellular location is the cytoplasm. It catalyses the reaction RNA(n+1) + phosphate = RNA(n) + a ribonucleoside 5'-diphosphate. Functionally, involved in mRNA degradation. Catalyzes the phosphorolysis of single-stranded polyribonucleotides processively in the 3'- to 5'-direction. This chain is Polyribonucleotide nucleotidyltransferase, found in Shewanella halifaxensis (strain HAW-EB4).